Consider the following 224-residue polypeptide: MAEKEESVKLLGFWASPFSRRVEMALKLKGVPYEYLEEDLPNKTPLLLELNPLHKKVPVLVHNDKILLESHLILEYIDQTWKNSPILPQDPYEKAMARFWAKFIDDQILTLGFRSLVKAEKGREVAIEETRELLMFLEKEVTGKDFFGGKTIGFLDMIAGSMIPFCLARLWKGIGIDMIPEEKFPELNRWIKNLEEVEAVRGCIPPREKQIERMTKIAETIKSA.

Positions 6–85 constitute a GST N-terminal domain; that stretch reads ESVKLLGFWA…YIDQTWKNSP (80 aa). Glutathione-binding positions include 16–17, 42–43, 56–57, and 69–70; these read SP, NK, KV, and ES. The region spanning 90–217 is the GST C-terminal domain; it reads DPYEKAMARF…EKQIERMTKI (128 aa). Threonine 151 carries the post-translational modification Phosphothreonine.

Belongs to the GST superfamily. Tau family.

The protein localises to the cytoplasm. Its subcellular location is the cytosol. The enzyme catalyses RX + glutathione = an S-substituted glutathione + a halide anion + H(+). Its function is as follows. May be involved in the conjugation of reduced glutathione to a wide number of exogenous and endogenous hydrophobic electrophiles and have a detoxification role against certain herbicides. This is Glutathione S-transferase U1 (GSTU1) from Arabidopsis thaliana (Mouse-ear cress).